The chain runs to 275 residues: Anthracycline biosynthesis protein DnrV (275 aa).

2 consecutive VOC domains span residues 8-136 (APAW…VWRK) and 150-263 (SVGW…VVEL).

Its pathway is antibiotic biosynthesis; daunorubicin biosynthesis. It participates in antibiotic biosynthesis; carminomycin biosynthesis. Functionally, involved in the biosynthesis of the anthracyclines carminomycin and daunorubicin (daunomycin) which are aromatic polyketide antibiotics that exhibit high cytotoxicity and are widely applied in the chemotherapy of a variety of cancers. In vivo, it acts jointly with DoxA in the conversion of 13-deoxycarminomycin and 13-deoxydaunorubicin to yield carminomycin and daunorubicin, respectively. In vitro, it also acts jointly with DoxA in the C-14 hydroxylation of daunorubicin to form doxorubicin, although this strain is not a doxorubicin producer. The sequence is that of Anthracycline biosynthesis protein DnrV (dnrV) from Streptomyces peucetius.